A 258-amino-acid chain; its full sequence is Shikimate dehydrogenase (NADP(+)) (258 aa).

Shikimate-binding positions include 14 to 16 (SES) and threonine 61. Lysine 65 functions as the Proton acceptor in the catalytic mechanism. Asparagine 86 and aspartate 101 together coordinate shikimate. Residues 125–129 (GSGGS) and leucine 211 each bind NADP(+). Tyrosine 213 is a shikimate binding site. Glycine 234 serves as a coordination point for NADP(+).

The protein belongs to the shikimate dehydrogenase family. Homodimer.

It carries out the reaction shikimate + NADP(+) = 3-dehydroshikimate + NADPH + H(+). It participates in metabolic intermediate biosynthesis; chorismate biosynthesis; chorismate from D-erythrose 4-phosphate and phosphoenolpyruvate: step 4/7. Its function is as follows. Involved in the biosynthesis of the chorismate, which leads to the biosynthesis of aromatic amino acids. Catalyzes the reversible NADPH linked reduction of 3-dehydroshikimate (DHSA) to yield shikimate (SA). This is Shikimate dehydrogenase (NADP(+)) from Clostridium botulinum (strain 657 / Type Ba4).